The primary structure comprises 344 residues: Heat-inducible transcription repressor HrcA (344 aa).

This sequence belongs to the HrcA family.

Functionally, negative regulator of class I heat shock genes (grpE-dnaK-dnaJ and groELS operons). Prevents heat-shock induction of these operons. This chain is Heat-inducible transcription repressor HrcA, found in Corynebacterium aurimucosum (strain ATCC 700975 / DSM 44827 / CIP 107346 / CN-1) (Corynebacterium nigricans).